Reading from the N-terminus, the 317-residue chain is Universal stress protein Mb2019 (317 aa).

Residues Gly13, 128-134 (GYRGQGA), 142-143 (SV), Gly175, Asp208, 277-283 (GSHGRGG), and 291-293 (SVS) each bind ATP.

It belongs to the universal stress protein A family.

The chain is Universal stress protein Mb2019 from Mycobacterium bovis (strain ATCC BAA-935 / AF2122/97).